Consider the following 678-residue polypeptide: Transcriptional regulator CRZ1 (678 aa).

A compositionally biased stretch (polar residues) spans 1–21 (MSFSNGNMASYMTSSNGEEQS). Disordered stretches follow at residues 1–50 (MSFS…SHTF) and 159–195 (TPADNQHRPSLTNQFLSPRSNYDGTTRSSGIDSNYSD). The segment covering 34–47 (YRRNNFRNSSNSGS) has biased composition (low complexity). Polar residues predominate over residues 166-195 (RPSLTNQFLSPRSNYDGTTRSSGIDSNYSD). Phosphothreonine is present on Thr-170. 3 positions are modified to phosphoserine: Ser-175, Ser-245, and Ser-385. The tract at residues 401 to 486 (KLKKSRRRSS…SNFNEDNNNN (86 aa)) is disordered. Over residues 410–428 (SQTSNNSFTSRRSSRSRSI) the composition is skewed to low complexity. Basic and acidic residues-rich tracts occupy residues 429–446 (SPDEKAKSISANREKLLE) and 457–467 (DNNRERYDNDS). The span at 472–486 (NTINSSNFNEDNNNN) shows a compositional bias: low complexity. 2 C2H2-type zinc fingers span residues 569 to 591 (FACDVCGKKFTRPYNLKSHLRTH) and 597 to 619 (FICSICGKAFARQHDRKRHEDLH).

Post-translationally, phosphorylated. Dephosphorylated by calcineurin which leads to rapid translocation from the cytoplasm to the nucleus. Phosphorylated by the cyclin-CDK PHO80-PHO85.

Its subcellular location is the nucleus. It localises to the cytoplasm. Its function is as follows. Involved in the regulation of calcium ion homeostasis. Binds to the calcineurin-dependent response element. Transcriptionally regulates PMC1, PMR1, PMR2A and FKS2. In Saccharomyces cerevisiae (strain ATCC 204508 / S288c) (Baker's yeast), this protein is Transcriptional regulator CRZ1 (CRZ1).